Here is a 519-residue protein sequence, read N- to C-terminus: MEGVLYKWTNYLSGWQPRWFLLCGGILSYYDSPEDAWKGCKGSIQMAVCEIQVHSVDNTRMDLIIPGEQYFYLKARSVAERQRWLVALGSAKACLTDSRTQKEKEFAENTENLKTKMSELRLYCDLLVQQVDKTKEVTTTGVSNSEEGIDVGTLLKSTCNTFLKTLEECMQIANAAFTSELLYRTPPGSPQLAMLKSSKMKHPIIPIHNSLERQMELSTCENGSLNMEINGEEEILMKNKNSLYLKSAEIDCSISSEENTDDNITVQGEIRKEDGMENLKNHDNNLTQSGSDSSCSPECLWEEGKEVIPTFFSTMNTSFSDIELLEDSGIPTEAFLASCYAVVPVLDKLGPTVFAPVKMDLVGNIKKVNQKYITNKEEFTTLQKIVLHEVEADVAQVRNSATEALLWLKRGLKFLKGFLTEVKNGEKDIQTALNNAYGKTLRQHHGWVVRGVFALALRAAPSYEDFVAALTVKEGDHQKEAFSIGMQRDLSLYLPAMEKQLAILDTLYEVHGLESDEVV.

The PH domain occupies 1 to 93; sequence MEGVLYKWTN…WLVALGSAKA (93 aa). T139 carries the post-translational modification Phosphothreonine. S145 is modified (phosphoserine). T153 carries the post-translational modification Phosphothreonine. The tract at residues 310-519 is glycolipid transfer protein homology domain; it reads TFFSTMNTSF…VHGLESDEVV (210 aa).

As to quaternary structure, homodimer. Interacts with ARF1; the interaction together with phosphatidylinositol 4-phosphate binding is required for FAPP2 GlcCer transfer ability. Expressed in kidney cell lines.

It localises to the golgi apparatus. Its subcellular location is the trans-Golgi network membrane. The protein resides in the membrane. Functionally, cargo transport protein that is required for apical transport from the Golgi complex. Transports AQP2 from the trans-Golgi network (TGN) to sites of AQP2 phosphorylation. Mediates the non-vesicular transport of glucosylceramide (GlcCer) from the trans-Golgi network (TGN) to the plasma membrane and plays a pivotal role in the synthesis of complex glycosphingolipids. Binding of both phosphatidylinositol 4-phosphate (PIP) and ARF1 are essential for the GlcCer transfer ability. Also required for primary cilium formation, possibly by being involved in the transport of raft lipids to the apical membrane, and for membrane tubulation. The protein is Pleckstrin homology domain-containing family A member 8 (PLEKHA8) of Homo sapiens (Human).